The primary structure comprises 440 residues: Protein naked cuticle homolog 1 (440 aa).

Glycine 2 carries N-myristoyl glycine lipidation. The EF-hand domain occupies 129 to 164; that stretch reads EEDNRQEWTFTLYDFDNNGKVTREDITSLLHTIYEV. The Ca(2+) site is built by aspartate 142, aspartate 144, asparagine 146, lysine 148, and aspartate 153. Residues 192–204 show a composition bias toward polar residues; it reads RWKNCTQTNTDTP. Disordered stretches follow at residues 192–221, 272–379, and 421–440; these read RWKN…KTSE, AAPA…QRPK, and RHEH…FYQS. The span at 211–221 shows a compositional bias: basic and acidic residues; that stretch reads EKCIEDSKTSE. Over residues 272–293 the composition is skewed to low complexity; that stretch reads AAPATEPAKPTHATRSSNQSRS. Over residues 324 to 336 the composition is skewed to basic residues; it reads RHTHALRSPKTHR. Over residues 352 to 362 the composition is skewed to pro residues; the sequence is APPPPSVPNQT. Basic residues predominate over residues 422-440; it reads HEHHHHHEHHHHYHHFYQS.

It belongs to the NKD family.

It localises to the cell membrane. Its subcellular location is the cytoplasm. Cell autonomous antagonist of the canonical Wnt signaling pathway. May activate a second Wnt signaling pathway that controls planar cell polarity. This chain is Protein naked cuticle homolog 1 (nkd1), found in Danio rerio (Zebrafish).